A 133-amino-acid chain; its full sequence is Small ribosomal subunit protein uS8 (133 aa).

Belongs to the universal ribosomal protein uS8 family. In terms of assembly, part of the 30S ribosomal subunit. Contacts proteins S5 and S12.

In terms of biological role, one of the primary rRNA binding proteins, it binds directly to 16S rRNA central domain where it helps coordinate assembly of the platform of the 30S subunit. This Prochlorococcus marinus (strain SARG / CCMP1375 / SS120) protein is Small ribosomal subunit protein uS8.